The primary structure comprises 317 residues: Porphobilinogen deaminase (317 aa).

Cys-242 is modified (S-(dipyrrolylmethanemethyl)cysteine).

The protein belongs to the HMBS family. In terms of assembly, monomer. The cofactor is dipyrromethane.

It carries out the reaction 4 porphobilinogen + H2O = hydroxymethylbilane + 4 NH4(+). Its pathway is porphyrin-containing compound metabolism; protoporphyrin-IX biosynthesis; coproporphyrinogen-III from 5-aminolevulinate: step 2/4. Tetrapolymerization of the monopyrrole PBG into the hydroxymethylbilane pre-uroporphyrinogen in several discrete steps. The chain is Porphobilinogen deaminase from Colwellia psychrerythraea (strain 34H / ATCC BAA-681) (Vibrio psychroerythus).